The sequence spans 332 residues: Protein pelota homolog (332 aa).

This sequence belongs to the eukaryotic release factor 1 family. Pelota subfamily. In terms of assembly, monomer. A divalent metal cation is required as a cofactor.

It is found in the cytoplasm. May function in recognizing stalled ribosomes, interact with stem-loop structures in stalled mRNA molecules, and effect endonucleolytic cleavage of the mRNA. May play a role in the release non-functional ribosomes and degradation of damaged mRNAs. Has endoribonuclease activity. The protein is Protein pelota homolog of Pyrobaculum aerophilum (strain ATCC 51768 / DSM 7523 / JCM 9630 / CIP 104966 / NBRC 100827 / IM2).